The primary structure comprises 336 residues: Glutamyl endopeptidase (336 aa).

Positions 1–29 are cleaved as a signal peptide; that stretch reads MKGKFLKVSSLFVATLTTATLVSSPAANA. Positions 30–68 are excised as a propeptide; it reads LSSKAMDNHPQQTQSSKQQTPKIQKGGNLKPLEQREHAN. Residues 34–61 are disordered; it reads AMDNHPQQTQSSKQQTPKIQKGGNLKPL. Over residues 39-51 the composition is skewed to low complexity; it reads PQQTQSSKQQTPK. Residues His119, Asp161, and Ser237 each act as charge relay system in the active site. Residues 283–336 are disordered; that stretch reads FANDDQPNNPDNPDNPNNPDNPNNPDEPNNPDNPNNPDNPDNGDNNNSDNPDAA. The span at 286 to 336 shows a compositional bias: low complexity; that stretch reads DDQPNNPDNPDNPNNPDNPNNPDEPNNPDNPNNPDNPDNGDNNNSDNPDAA. 11 tandem repeats follow at residues 289–291, 292–294, 295–297, 298–300, 301–303, 304–306, 310–312, 313–315, 316–318, 319–321, and 322–324. Residues 289–324 are 11 X 3 AA repeats of P-[DN]-N; sequence PNNPDNPDNPNNPDNPNNPDEPNNPDNPNNPDNPDN.

Belongs to the peptidase S1B family. Proteolytically cleaved by aureolysin (aur). This cleavage leads to the activation of SspA.

The protein localises to the secreted. The enzyme catalyses Preferential cleavage: Glu-|-Xaa, Asp-|-Xaa.. Preferentially cleaves peptide bonds on the carboxyl-terminal side of aspartate and glutamate. Along with other extracellular proteases it is involved in colonization and infection of human tissues. Required for proteolytic maturation of thiol protease SspB and inactivation of SspC, an inhibitor of SspB. It is the most important protease for degradation of fibronectin-binding protein (FnBP) and surface protein A, which are involved in adherence to host cells. May also protect bacteria against host defense mechanism by cleaving the immunoglobulin classes IgG, IgA and IgM. May be involved in the stability of secreted lipases. This chain is Glutamyl endopeptidase (sspA), found in Staphylococcus aureus (strain NCTC 8325 / PS 47).